A 487-amino-acid polypeptide reads, in one-letter code: Zinc finger and BTB domain-containing protein 32 (487 aa).

Residues 29–87 (CDTLITVGGQEFPAHSLVLAGVSQQLGRRGQWALGEGISPSTFAQLLNFVYGESVELQP) enclose the BTB domain. Over residues 113 to 166 (RGDRAKKPDPGLKKHQEEPEKPSRNAERELGDPGEKQKPEQVSRTGGREQEMLH) the composition is skewed to basic and acidic residues. 2 disordered regions span residues 113-208 (RGDR…ADGK) and 308-371 (QNQL…ARSR). The span at 308 to 320 (QNQLASSSPTPGS) shows a compositional bias: polar residues. Over residues 357-369 (PPRPHPPPAPPAR) the composition is skewed to pro residues. 3 consecutive C2H2-type zinc fingers follow at residues 373–395 (YACS…YRVH), 401–423 (FSCS…LRTH), and 428–450 (YRXX…MRGH). Residues 468–487 (SSSRPSRPSTSPCCPSSSTT) form a disordered region.

The protein belongs to the krueppel C2H2-type zinc-finger protein family. In terms of assembly, homodimer (via PTB domain). Interacts with the N-terminal of FANCC. Interacts with ZBTB16. Interacts with GATA3.

The protein localises to the nucleus. DNA-binding protein that binds to the to a 5'-TGTACAGTGT-3' core sequence. May function as a transcriptional transactivator and transcriptional repressor. Probably exerts its repressor effect by preventing GATA3 from binding to DNA. May play a role in regulating the differentiation and activation of helper T-cells. This is Zinc finger and BTB domain-containing protein 32 (ZBTB32) from Pan troglodytes (Chimpanzee).